Reading from the N-terminus, the 338-residue chain is Glyceraldehyde-3-phosphate dehydrogenase (338 aa).

Residues 13–14 (RI), Asp35, and Arg80 each bind NAD(+). Residues 151–153 (SCT), Thr182, 211–212 (TG), and Arg234 contribute to the D-glyceraldehyde 3-phosphate site. Cys152 (nucleophile) is an active-site residue. Position 317 (Asn317) interacts with NAD(+).

This sequence belongs to the glyceraldehyde-3-phosphate dehydrogenase family. In terms of assembly, homotetramer.

The protein localises to the cytoplasm. It catalyses the reaction D-glyceraldehyde 3-phosphate + phosphate + NAD(+) = (2R)-3-phospho-glyceroyl phosphate + NADH + H(+). Its pathway is carbohydrate degradation; glycolysis; pyruvate from D-glyceraldehyde 3-phosphate: step 1/5. In Aspergillus oryzae (strain ATCC 42149 / RIB 40) (Yellow koji mold), this protein is Glyceraldehyde-3-phosphate dehydrogenase (gpdA).